Reading from the N-terminus, the 155-residue chain is Protein-export protein SecB (155 aa).

Belongs to the SecB family. In terms of assembly, homotetramer, a dimer of dimers. One homotetramer interacts with 1 SecA dimer.

It is found in the cytoplasm. One of the proteins required for the normal export of preproteins out of the cell cytoplasm. It is a molecular chaperone that binds to a subset of precursor proteins, maintaining them in a translocation-competent state. It also specifically binds to its receptor SecA. The protein is Protein-export protein SecB of Vibrio atlanticus (strain LGP32) (Vibrio splendidus (strain Mel32)).